Here is a 304-residue protein sequence, read N- to C-terminus: uncharacterized protein (304 aa).

Over residues 1-10 (MLWAHRKKRK) the composition is skewed to basic residues. The interval 1-28 (MLWAHRKKRKAATETTEDKPLESHRAND) is disordered. The segment covering 16 to 27 (TEDKPLESHRAN) has biased composition (basic and acidic residues). S39 bears the Phosphoserine mark. The segment covering 91 to 101 (KQKISGSSMTK) has biased composition (polar residues). 3 disordered regions span residues 91–115 (KQKI…SMED), 138–160 (SMLQ…ISPE), and 190–304 (SHTV…IYGS). The segment covering 151–160 (HAESRNISPE) has biased composition (basic and acidic residues). S158 is subject to Phosphoserine. Low complexity predominate over residues 195 to 206 (SQSRHSNQSHHS). The segment covering 208-223 (PSHQSNQSHPVYSSYQ) has biased composition (polar residues). Positions 229–248 (HLSPQSYPSYSSHQSHPGHS) are enriched in low complexity. Positions 249-263 (NHQGHSGLSSHQTHL) are enriched in polar residues. Residues 264 to 292 (GHSNHQGHPGHSSHQSHQGQPGHPSHQSH) show a composition bias toward low complexity.

This is an uncharacterized protein from Mus musculus (Mouse).